Reading from the N-terminus, the 629-residue chain is Arginine--tRNA ligase (629 aa).

The 'HIGH' region motif lies at 128-138 (VNPTKPLHMGH).

The protein belongs to the class-I aminoacyl-tRNA synthetase family.

It localises to the cytoplasm. It carries out the reaction tRNA(Arg) + L-arginine + ATP = L-arginyl-tRNA(Arg) + AMP + diphosphate. The protein is Arginine--tRNA ligase (argS) of Pyrococcus horikoshii (strain ATCC 700860 / DSM 12428 / JCM 9974 / NBRC 100139 / OT-3).